The primary structure comprises 437 residues: Eukaryotic peptide chain release factor subunit 1 (437 aa).

Residues 61–64 (NIKS) carry the NIKS motif; plays an important role in translational termination motif.

It belongs to the eukaryotic release factor 1 family. As to quaternary structure, component of the eRF1-eRF3-GTP ternary complex, composed of ETF1/ERF1 and eRF3 (GSPT1/ERF3A or GSPT2/ERF3B) and GTP.

Its subcellular location is the cytoplasm. Functionally, component of the eRF1-eRF3-GTP ternary complex, a ternary complex that mediates translation termination in response to the termination codons. The eRF1-eRF3-GTP complex binds to a stop codon in the ribosomal A-site. ETF1/ERF1 is responsible for stop codon recognition and inducing hydrolysis of peptidyl-tRNA. Following GTP hydrolysis, eRF3 (GSPT1/ERF3A or GSPT2/ERF3B) dissociates, permitting ETF1/eRF1 to accommodate fully in the A-site, followed by hydrolysis of peptidyl-tRNA. In Xenopus laevis (African clawed frog), this protein is Eukaryotic peptide chain release factor subunit 1 (etf1).